The chain runs to 838 residues: Probable bifunctional folylpolyglutamate synthase/dihydropteroate synthase (838 aa).

A folylpolyglutamate synthase region spans residues 1–418 (MEYHEAVNFL…LVVGSLYVVA (418 aa)). 46 to 52 (GSNGKGS) is a binding site for ATP. The tract at residues 541 to 561 (AADAGEDDERGAGDASDAGHD) is disordered. The Pterin-binding domain maps to 569–819 (TAVMGILNVT…DVPENVAAVN (251 aa)). A DHPS region spans residues 571–838 (VMGILNVTPN…RFEADAERED (268 aa)). Residue asparagine 576 coordinates Mg(2+). (7,8-dihydropterin-6-yl)methyl diphosphate contacts are provided by residues threonine 616, aspartate 649, asparagine 668, aspartate 738, lysine 774, and 807-809 (RVH).

In the N-terminal section; belongs to the folylpolyglutamate synthase family. This sequence in the C-terminal section; belongs to the DHPS family. Requires Mg(2+) as cofactor.

It carries out the reaction (6S)-5,6,7,8-tetrahydrofolyl-(gamma-L-Glu)(n) + L-glutamate + ATP = (6S)-5,6,7,8-tetrahydrofolyl-(gamma-L-Glu)(n+1) + ADP + phosphate + H(+). The catalysed reaction is (7,8-dihydropterin-6-yl)methyl diphosphate + 4-aminobenzoate = 7,8-dihydropteroate + diphosphate. The protein operates within cofactor biosynthesis; tetrahydrofolylpolyglutamate biosynthesis. Its pathway is cofactor biosynthesis; tetrahydrofolate biosynthesis; 7,8-dihydrofolate from 2-amino-4-hydroxy-6-hydroxymethyl-7,8-dihydropteridine diphosphate and 4-aminobenzoate: step 1/2. Can complement an H.volcanii mutant strain that is thymidine auxotroph because it lacks the two dihydrofolate reductase genes encoded by hdrA and hdrB. In Haloferax volcanii (strain ATCC 29605 / DSM 3757 / JCM 8879 / NBRC 14742 / NCIMB 2012 / VKM B-1768 / DS2) (Halobacterium volcanii), this protein is Probable bifunctional folylpolyglutamate synthase/dihydropteroate synthase (folCP).